The following is a 112-amino-acid chain: DNA-binding protein PF1087 (112 aa).

This sequence belongs to the PDCD5 family.

The protein is DNA-binding protein PF1087 of Pyrococcus furiosus (strain ATCC 43587 / DSM 3638 / JCM 8422 / Vc1).